Reading from the N-terminus, the 423-residue chain is Glucose-1-phosphate adenylyltransferase (423 aa).

Residues Y107, G172, 187-188 (EK), and S205 contribute to the alpha-D-glucose 1-phosphate site.

Belongs to the bacterial/plant glucose-1-phosphate adenylyltransferase family. Homotetramer.

It carries out the reaction alpha-D-glucose 1-phosphate + ATP + H(+) = ADP-alpha-D-glucose + diphosphate. It functions in the pathway glycan biosynthesis; glycogen biosynthesis. In terms of biological role, involved in the biosynthesis of ADP-glucose, a building block required for the elongation reactions to produce glycogen. Catalyzes the reaction between ATP and alpha-D-glucose 1-phosphate (G1P) to produce pyrophosphate and ADP-Glc. This chain is Glucose-1-phosphate adenylyltransferase, found in Albidiferax ferrireducens (strain ATCC BAA-621 / DSM 15236 / T118) (Rhodoferax ferrireducens).